Reading from the N-terminus, the 489-residue chain is GTPase Der (489 aa).

EngA-type G domains follow at residues 30–199 (PVVS…KDKP) and 227–403 (FRLA…SRSH). Residues 36 to 43 (GRQNVGKS), 85 to 89 (DTPGL), 151 to 154 (NKAD), 233 to 240 (GKPNSGKS), 280 to 284 (DTAGI), and 345 to 348 (NKWD) each bind GTP. One can recognise a KH-like domain in the interval 404-488 (RKVSTSELNK…PIRLEFRSDR (85 aa)).

The protein belongs to the TRAFAC class TrmE-Era-EngA-EngB-Septin-like GTPase superfamily. EngA (Der) GTPase family. In terms of assembly, associates with the 50S ribosomal subunit.

In terms of biological role, GTPase that plays an essential role in the late steps of ribosome biogenesis. The chain is GTPase Der from Leptospira interrogans serogroup Icterohaemorrhagiae serovar copenhageni (strain Fiocruz L1-130).